Consider the following 111-residue polypeptide: Probable 4-amino-4-deoxy-L-arabinose-phosphoundecaprenol flippase subunit ArnE (111 aa).

The next 3 helical transmembrane spans lie at 38–58, 61–81, and 91–111; these read LWLG…LLVL, LPVG…TLAA, and PRHW…GSAA. Positions 40–109 constitute an EamA domain; that stretch reads LGLALICMGA…IISGIIILGS (70 aa).

The protein belongs to the ArnE family. As to quaternary structure, heterodimer of ArnE and ArnF.

It is found in the cell inner membrane. The protein operates within bacterial outer membrane biogenesis; lipopolysaccharide biosynthesis. Functionally, translocates 4-amino-4-deoxy-L-arabinose-phosphoundecaprenol (alpha-L-Ara4N-phosphoundecaprenol) from the cytoplasmic to the periplasmic side of the inner membrane. The polypeptide is Probable 4-amino-4-deoxy-L-arabinose-phosphoundecaprenol flippase subunit ArnE (Salmonella heidelberg (strain SL476)).